We begin with the raw amino-acid sequence, 298 residues long: Quinolinate synthase (298 aa).

Iminosuccinate-binding residues include His-19 and Ser-36. Residue Cys-81 coordinates [4Fe-4S] cluster. Residues 107–109 (YVN) and Ser-124 each bind iminosuccinate. Cys-168 serves as a coordination point for [4Fe-4S] cluster. Iminosuccinate-binding positions include 193–195 (HPE) and Thr-210. Cys-254 is a [4Fe-4S] cluster binding site.

Belongs to the quinolinate synthase family. Type 2 subfamily. [4Fe-4S] cluster serves as cofactor.

It is found in the cytoplasm. It carries out the reaction iminosuccinate + dihydroxyacetone phosphate = quinolinate + phosphate + 2 H2O + H(+). Its pathway is cofactor biosynthesis; NAD(+) biosynthesis; quinolinate from iminoaspartate: step 1/1. Catalyzes the condensation of iminoaspartate with dihydroxyacetone phosphate to form quinolinate. This chain is Quinolinate synthase, found in Thermotoga petrophila (strain ATCC BAA-488 / DSM 13995 / JCM 10881 / RKU-1).